Consider the following 279-residue polypeptide: MTELTRIPLAGVIGSPIAHSRSPALHGYWLKRYGLKGHYIPMDVAQADLRDVLAAMPRMGFVGCNVTIPHKESVIGLADIVTDRAALIGAANTLIFRKDGKIYADNTDGTGFTANLRQNAPAWQPQSGPAVVWGAGGAARAVIAALIEVGVPEIRLANRSRARADALRSDFGAKVHVHDWVQAGNILEDAMTVVNTTSLGMVGKPEFRVPLDALNPKAVVTDLVYAPLRTRLLVEAEAAGCRTVDGLGMLLHQAAPGFERWFGVRPEVDEETRAAVLAA.

Residues 20-22 (SRS) and threonine 67 each bind shikimate. The Proton acceptor role is filled by lysine 71. Aspartate 83 contacts NADP(+). 2 residues coordinate shikimate: asparagine 92 and aspartate 108. NADP(+) is bound by residues 134–138 (GAGGA) and leucine 223. Tyrosine 225 is a shikimate binding site. Residue glycine 246 coordinates NADP(+).

The protein belongs to the shikimate dehydrogenase family. Homodimer.

It catalyses the reaction shikimate + NADP(+) = 3-dehydroshikimate + NADPH + H(+). It functions in the pathway metabolic intermediate biosynthesis; chorismate biosynthesis; chorismate from D-erythrose 4-phosphate and phosphoenolpyruvate: step 4/7. Involved in the biosynthesis of the chorismate, which leads to the biosynthesis of aromatic amino acids. Catalyzes the reversible NADPH linked reduction of 3-dehydroshikimate (DHSA) to yield shikimate (SA). In Cereibacter sphaeroides (strain ATCC 17029 / ATH 2.4.9) (Rhodobacter sphaeroides), this protein is Shikimate dehydrogenase (NADP(+)).